A 334-amino-acid chain; its full sequence is D-fructose 1,6-bisphosphatase class 2/sedoheptulose 1,7-bisphosphatase (334 aa).

Residues Asp-33, Glu-57, Asp-85, and Glu-88 each coordinate Mn(2+). Substrate contacts are provided by residues Glu-88–Thr-90, Tyr-119, Arg-164–Arg-166, and Asp-186–Asp-188. Mn(2+) is bound at residue Glu-213.

Belongs to the FBPase class 2 family. As to quaternary structure, homotetramer. Mn(2+) is required as a cofactor.

The catalysed reaction is beta-D-fructose 1,6-bisphosphate + H2O = beta-D-fructose 6-phosphate + phosphate. It catalyses the reaction D-sedoheptulose 1,7-bisphosphate + H2O = D-sedoheptulose 7-phosphate + phosphate. The protein operates within carbohydrate biosynthesis; Calvin cycle. Functionally, catalyzes the hydrolysis of fructose 1,6-bisphosphate (Fru 1,6-P2) and sedoheptulose 1,7-bisphosphate (Sed 1,7-P2) to fructose 6-phosphate and sedoheptulose 7-phosphate, respectively. The protein is D-fructose 1,6-bisphosphatase class 2/sedoheptulose 1,7-bisphosphatase of Synechococcus sp. (strain CC9311).